We begin with the raw amino-acid sequence, 816 residues long: H(+)/Cl(-) exchange transporter 5 (816 aa).

Residues 1 to 28 (MAMWQGAMDNRGFQQGSFNSFQSSSSDE) form a disordered region. Residues 1 to 124 (MAMWQGAMDN…WALIHSVSDA (124 aa)) are Cytoplasmic-facing. Over residues 12–25 (GFQQGSFNSFQSSS) the composition is skewed to low complexity. The next 2 helical transmembrane spans lie at 125 to 162 (FSGWLLMLLIGLLSGSLAGLIDISAHWMTDLKEGICTE) and 208 to 231 (VNYFMYVLWALLFAFLAVSLVKVF). Positions 237–241 (GSGIP) match the Selectivity filter part_1 motif. Position 238 (S238) interacts with chloride. The helical intramembrane region spans 240–247 (IPEIKTIL). The next 2 membrane-spanning stretches (helical) occupy residues 256-275 (LGKWTLIIKTITLVLAVSSG) and 281-300 (EGPLVHVACCCGNILCHCFN). The Selectivity filter part_2 motif lies at 279-283 (GKEGP). 2 intramembrane regions (helical) span residues 312–324 (VLSAAAAAGVSVA) and 328–336 (PIGGVLFSL). The next 5 membrane-spanning stretches (helical) occupy residues 348–366 (LWRSFFAALVAAFTLRSIN), 389–414 (LVPFILLGIFGGLWGALFIRTNIAWC), 422–442 (LGKYPVIEVLVVTAITAILAF), 498–518 (MWQLALTLILKIVITIFTFGM), and 523–542 (GLFIPSMAVGAIAGRLLGVG). The Selectivity filter part_3 motif lies at 523–527 (GLFIP). Position 525 (F525) interacts with chloride. The helical intramembrane region spans 570-584 (GLYAMVGAAACLGGV). Positions 585 to 587 (TRM) form an intramembrane region, note=Loop between two helices. The helical intramembrane region spans 588–599 (TVSLVVIMFELT). Positions 600-604 (GGLEY) form an intramembrane region, note=Loop between two helices. A helical membrane pass occupies residues 605–622 (IVPLMAAAMTSKWVADAL). Residues 623–816 (GREGIYDAHI…NQDPDSILFN (194 aa)) are Cytoplasmic-facing. Y628 lines the chloride pocket. CBS domains are found at residues 656–720 (MKPR…ARKK) and 752–812 (ILDL…DPDS). ATP is bound by residues T666, 687–689 (YSG), and 794–797 (TKKD).

This sequence belongs to the chloride channel (TC 2.A.49) family. ClC-5/CLCN5 subfamily. In terms of assembly, interacts with NEDD4 and NEDD4L. Ubiquitinated by NEDD4L in the presence of albumin; which promotes endocytosis and proteasomal degradation.

Its subcellular location is the golgi apparatus membrane. It localises to the endosome membrane. It is found in the cell membrane. It carries out the reaction 2 chloride(in) + H(+)(out) = 2 chloride(out) + H(+)(in). Functionally, proton-coupled chloride transporter. Functions as antiport system and exchanges chloride ions against protons. Important for normal acidification of the endosome lumen. May play an important role in renal tubular function. The CLC channel family contains both chloride channels and proton-coupled anion transporters that exchange chloride or another anion for protons. The absence of conserved gating glutamate residues is typical for family members that function as channels. The polypeptide is H(+)/Cl(-) exchange transporter 5 (CLCN5) (Sus scrofa (Pig)).